Reading from the N-terminus, the 196-residue chain is Thymidine kinase (196 aa).

Position 17–24 (17–24) interacts with ATP; that stretch reads GPMFAGKT. The Proton acceptor role is filled by Glu92. Residue Phe121 participates in substrate binding. Residues Cys146 and Cys149 each coordinate Zn(2+). Position 166-170 (166-170) interacts with substrate; the sequence is LILAG. Positions 179 and 182 each coordinate Zn(2+).

It belongs to the thymidine kinase family.

The catalysed reaction is thymidine + ATP = dTMP + ADP + H(+). Its function is as follows. Phosphorylates thymidine. ASFV replicates in the cytoplasm of infected cells and contains genes encoding a number of enzymes needed for DNA synthesis, including thymidine kinase. Important for growth in swine macrophages in vitro and is a virus virulence factor in swine. This chain is Thymidine kinase, found in Ornithodoros (relapsing fever ticks).